The chain runs to 465 residues: Coumaroyl-CoA:anthocyanidin 3-O-glucoside-6''-O-coumaroyltransferase 2 (465 aa).

Residue M1 is modified to N-acetylmethionine. Residues H173 and D406 each act as proton acceptor in the active site.

This sequence belongs to the plant acyltransferase family. In terms of tissue distribution, highly expressed in flowers, and leaves. Lower levels of expression in stems, roots and siliques.

In terms of biological role, involved in the acylation of the 6'' position of the 3-O-glucose residue of anthocyanin. Also able to use flavonol 3-glucosides as the acyl acceptor. The protein is Coumaroyl-CoA:anthocyanidin 3-O-glucoside-6''-O-coumaroyltransferase 2 (3AT2) of Arabidopsis thaliana (Mouse-ear cress).